Here is a 118-residue protein sequence, read N- to C-terminus: Co-chaperonin GroES (118 aa).

The protein belongs to the GroES chaperonin family. In terms of assembly, heptamer of 7 subunits arranged in a ring. Interacts with the chaperonin GroEL.

It is found in the cytoplasm. In terms of biological role, together with the chaperonin GroEL, plays an essential role in assisting protein folding. The GroEL-GroES system forms a nano-cage that allows encapsulation of the non-native substrate proteins and provides a physical environment optimized to promote and accelerate protein folding. GroES binds to the apical surface of the GroEL ring, thereby capping the opening of the GroEL channel. This chain is Co-chaperonin GroES, found in Helicobacter acinonychis (strain Sheeba).